Consider the following 309-residue polypeptide: Taste receptor type 2 member 31 (309 aa).

Residues 1 to 2 are Extracellular-facing; that stretch reads MT. Residues 3–23 traverse the membrane as a helical segment; it reads TFIPIIFSSLVVVIFVIGNFA. At 24–55 the chain is on the cytoplasmic side; it reads NGFIALVNSIEWFKRQKISFADQILTALAVSR. A helical membrane pass occupies residues 56–76; that stretch reads VGLLWVLLLNWYSTVLNPAFY. Residues 77–100 are Extracellular-facing; the sequence is SVEVRTTAYNVWAVTGHFSNWLAT. Residues 101–121 traverse the membrane as a helical segment; sequence SLSIFYLLKIANFSNLIFLHL. Residues 122 to 126 lie on the Cytoplasmic side of the membrane; sequence KRRVK. The chain crosses the membrane as a helical span at residues 127–147; sequence SVILVMLLGPLLFLACQLFMI. The Extracellular segment spans residues 148–181; that stretch reads NMKEIVRTKEYEGNMTWKIKLRSAVYLSDATVTT. Asparagine 161 carries an N-linked (GlcNAc...) asparagine glycan. A helical transmembrane segment spans residues 182-202; it reads LGNLVPFTLTLLCFLLLICSL. Residues 203–229 lie on the Cytoplasmic side of the membrane; that stretch reads CKHLKKMQLHGKGSQDPSTKVHIKVLQ. The helical transmembrane segment at 230–250 threads the bilayer; the sequence is TVISFLLLCAIYFLSIMISVW. The Extracellular portion of the chain corresponds to 251–259; that stretch reads SFGSLKNKP. A helical membrane pass occupies residues 260–280; sequence VFMFCKAMRFSYPSIHPFILI. Topologically, residues 281 to 309 are cytoplasmic; that stretch reads WGNKKLKQTFLSVLRQVRYWVKGEKPSSP.

The protein belongs to the G-protein coupled receptor T2R family.

It is found in the membrane. In terms of biological role, receptor that may play a role in the perception of bitterness and is gustducin-linked. May play a role in sensing the chemical composition of the gastrointestinal content. The activity of this receptor may stimulate alpha gustducin, mediate PLC-beta-2 activation and lead to the gating of TRPM5. This is Taste receptor type 2 member 31 (TAS2R31) from Pan troglodytes (Chimpanzee).